A 510-amino-acid chain; its full sequence is Indoleacetate--CoA ligase (510 aa).

The protein belongs to the ATP-dependent AMP-binding enzyme family. Monomer.

It carries out the reaction (indol-3-yl)acetate + ATP + CoA = (indol-3-yl)acetyl-CoA + AMP + diphosphate. It catalyses the reaction (indol-3-yl)acetate + ATP + H(+) = (indol-3-yl)acetyl-AMP + diphosphate. The catalysed reaction is (indol-3-yl)acetyl-AMP + CoA = (indol-3-yl)acetyl-CoA + AMP + H(+). Its activity is regulated as follows. Inhibited by high concentrations of substrates, and by the synthetic auxin compound 2,4-dichlorophenoxyacetate (2,4-D), which does not serve as substrate. Functionally, involved in degradation of indoleacetate, the most common member of the auxin class of plant hormones. Highly specific indoleacetate-CoA ligase which catalyzes the ATP-dependent activation of indoleacetate (IAA) to indoleacetyl-CoA. Also activates some closely related compounds such as the non-physiological compound (2-naphthyl)acetate and phenylacetate, which seems to be a fortuitous substrate for IaaB. In Aromatoleum aromaticum (strain DSM 19018 / LMG 30748 / EbN1) (Azoarcus sp. (strain EbN1)), this protein is Indoleacetate--CoA ligase.